The primary structure comprises 118 residues: Large ribosomal subunit protein uL18 (118 aa).

This sequence belongs to the universal ribosomal protein uL18 family. As to quaternary structure, part of the 50S ribosomal subunit; part of the 5S rRNA/L5/L18/L25 subcomplex. Contacts the 5S and 23S rRNAs.

Its function is as follows. This is one of the proteins that bind and probably mediate the attachment of the 5S RNA into the large ribosomal subunit, where it forms part of the central protuberance. The protein is Large ribosomal subunit protein uL18 of Helicobacter hepaticus (strain ATCC 51449 / 3B1).